Here is a 365-residue protein sequence, read N- to C-terminus: Peptide chain release factor 2 (365 aa).

Q252 is modified (N5-methylglutamine).

It belongs to the prokaryotic/mitochondrial release factor family. Post-translationally, methylated by PrmC. Methylation increases the termination efficiency of RF2.

The protein resides in the cytoplasm. Peptide chain release factor 2 directs the termination of translation in response to the peptide chain termination codons UGA and UAA. The polypeptide is Peptide chain release factor 2 (Aeromonas hydrophila subsp. hydrophila (strain ATCC 7966 / DSM 30187 / BCRC 13018 / CCUG 14551 / JCM 1027 / KCTC 2358 / NCIMB 9240 / NCTC 8049)).